The chain runs to 296 residues: Small ribosomal subunit protein uS2 (296 aa).

The span at 274-284 shows a compositional bias: low complexity; sequence ASSAAPADTWA. A disordered region spans residues 274-296; that stretch reads ASSAAPADTWAGESGNPDAGVKW.

This sequence belongs to the universal ribosomal protein uS2 family. Component of the small ribosomal subunit. Mature ribosomes consist of a small (40S) and a large (60S) subunit. The 40S subunit contains about 33 different proteins and 1 molecule of RNA (18S). The 60S subunit contains about 49 different proteins and 3 molecules of RNA (25S, 5.8S and 5S). Interacts with RPS21.

Its subcellular location is the cytoplasm. Its function is as follows. Required for the assembly and/or stability of the 40S ribosomal subunit. Required for the processing of the 20S rRNA-precursor to mature 18S rRNA in a late step of the maturation of 40S ribosomal subunits. This Ajellomyces capsulatus (strain G186AR / H82 / ATCC MYA-2454 / RMSCC 2432) (Darling's disease fungus) protein is Small ribosomal subunit protein uS2.